Consider the following 406-residue polypeptide: Glucose-6-phosphate isomerase (406 aa).

Glu-259 (proton donor) is an active-site residue. Catalysis depends on residues His-284 and Lys-397.

The protein belongs to the GPI family.

It localises to the cytoplasm. The enzyme catalyses alpha-D-glucose 6-phosphate = beta-D-fructose 6-phosphate. The protein operates within carbohydrate biosynthesis; gluconeogenesis. It participates in carbohydrate degradation; glycolysis; D-glyceraldehyde 3-phosphate and glycerone phosphate from D-glucose: step 2/4. Catalyzes the reversible isomerization of glucose-6-phosphate to fructose-6-phosphate. This Campylobacter jejuni subsp. jejuni serotype O:2 (strain ATCC 700819 / NCTC 11168) protein is Glucose-6-phosphate isomerase.